The chain runs to 342 residues: Dihydroorotate dehydrogenase (quinone) (342 aa).

FMN contacts are provided by residues 61 to 65 (AGLDK) and Thr-85. Position 65 (Lys-65) interacts with substrate. 110-114 (NRMGF) serves as a coordination point for substrate. FMN-binding residues include Asn-138 and Asn-171. Asn-171 is a substrate binding site. Catalysis depends on Ser-174, which acts as the Nucleophile. Asn-176 serves as a coordination point for substrate. The FMN site is built by Lys-216 and Thr-244. Position 245-246 (245-246 (NT)) interacts with substrate. FMN-binding positions include Gly-267, Gly-296, and 317–318 (YS).

It belongs to the dihydroorotate dehydrogenase family. Type 2 subfamily. Monomer. Requires FMN as cofactor.

The protein resides in the cell membrane. The enzyme catalyses (S)-dihydroorotate + a quinone = orotate + a quinol. It participates in pyrimidine metabolism; UMP biosynthesis via de novo pathway; orotate from (S)-dihydroorotate (quinone route): step 1/1. Its function is as follows. Catalyzes the conversion of dihydroorotate to orotate with quinone as electron acceptor. The sequence is that of Dihydroorotate dehydrogenase (quinone) from Cellvibrio japonicus (strain Ueda107) (Pseudomonas fluorescens subsp. cellulosa).